We begin with the raw amino-acid sequence, 127 residues long: Urotensin-2 (127 aa).

Residues 1 to 16 form the signal peptide; sequence MSKLFFCCLILAGSFC. The propeptide occupies 17–111; it reads SFRSLPIIVP…RLQSKDRKQF (95 aa). An intrachain disulfide couples cysteine 121 to cysteine 126.

This sequence belongs to the urotensin-2 family. In terms of tissue distribution, central nervous system. Spinal cord.

The protein resides in the secreted. Involved in smooth muscle stimulating and ion mobilizing activities. It has a suggested role as a corticotropin-releasing factor. This chain is Urotensin-2 (UTS2), found in Pelophylax ridibundus (Marsh frog).